A 1024-amino-acid polypeptide reads, in one-letter code: MSYAELFCQSNFSFLTGASHAEELVLQAAFYRYQAIAITDECSVAGVVKAHATIEQHKLDIKQIVGSMFWLNDECQVVLLCPCRKAYAELCRIITNARRRSEKGSYQLSEWDLMSVRHCFVLWLPTHQESDHYWGRWLQQHHAHRLWVAIQRHLGGDDDAYTTHCELLANEFQLPIAACGGVLMHAVERLPLQHVLTAVKHGCSVDKLGFSRLSNAERALRPLNKLSRIYKSKWLEESTHIADLCEFKLSDLKYEYPTELIPNGYTPTSYLRMLVERGKKLRFPEGIPADIHQTIENELALIEELEYHYYFLTIHDIVMFAKQQGILYQGRGSAANSVVCYCLEITAVDPRQISVLFERFISREREEPPDIDVDFEHERREEVIQYIYKKYGRERAALAATVISYRFKSAVREVGKALGIEETQLDFFIKNVNRRDRTQGWQAQIIELGLQPESLKGQQFIQLVNEITGFPRHLSQHVGGFVISSGPLYELVPVENASMEDRTIIQWDKDDLESLKLLKVDVLALGMLNAIRKCFQLVEKHHQRSLSIAEITRLQDDPHVYRMIQKADTVGVFQIESRAQMSMLPRLKPARYYDLVVQIAIARPGPIQGDMVHPFLKRRNGEEPISYPSEEVKSVLERTMGVPIFQEQVIKLAMVAAGFSGGEADQLRRAMAAWKKNGDLAKFKPKLIDGMRERGYDLEFAERIFDQICGFGEYGFPESHSASFAVLAYCSAWLKFYYPAEFYTALLNSQPMGFYSPSQLIQDARRHGVEVLPVCINHSSYQHHLVQRPNGRLGVQLGFRLVKGFNQESASRLVERRPSTGYRAIQEVKQILRNRRDIELLASADAFQILSGNRYNARWAAMDSLSDLPLFNHIEEPMANYQAQPSEYENLIEDYASTGLSLSRHPITLLEEAGKLPRFTRMKQLVEKEHNSLVTVIGVVTGRQSPGTAAGVTFFTLEDDTGNINVVVWRATARAQKQAYLTSKVLMVKGILEREGEVTHVIAGKLIDCTHNLAELKSKSRDFH.

The protein belongs to the DNA polymerase type-C family. DnaE2 subfamily.

The protein resides in the cytoplasm. The enzyme catalyses DNA(n) + a 2'-deoxyribonucleoside 5'-triphosphate = DNA(n+1) + diphosphate. Its function is as follows. DNA polymerase involved in damage-induced mutagenesis and translesion synthesis (TLS). It is not the major replicative DNA polymerase. The polypeptide is Error-prone DNA polymerase (Vibrio campbellii (strain ATCC BAA-1116)).